A 504-amino-acid polypeptide reads, in one-letter code: Sodium-coupled neutral amino acid symporter 2 (504 aa).

Positions 1–23 are disordered; that stretch reads MKKTEMGRFNISPDEDSSSYSSN. Residues 1-76 are Cytoplasmic-facing; that stretch reads MKKTEMGRFN…HPGTTSFGMS (76 aa). The interval 1-96 is regulates protein turnover upon amino acid deprivation; the sequence is MKKTEMGRFN…SGILGLSYAM (96 aa). Phosphoserine occurs at positions 12, 21, 22, and 55. A helical membrane pass occupies residues 77–96; that stretch reads VFNLSNAIVGSGILGLSYAM. A Na(+)-binding site is contributed by Asn82. The Extracellular segment spans residues 97–102; sequence ANTGIA. A helical membrane pass occupies residues 103-123; the sequence is LFIILLTFVSIFSLYSVHLLL. Residues 124–158 lie on the Cytoplasmic side of the membrane; sequence KTANEGGSLLYEQLGHKAYGLAGKLAASGSITMQN. A helical transmembrane segment spans residues 159–177; the sequence is IGAMSSYLFIVKYELPLVI. Topologically, residues 178–188 are extracellular; that stretch reads KALMNIEDTNG. A helical membrane pass occupies residues 189–209; it reads LWYLNGDYLVLLVSLVLILPL. Residues 210-217 lie on the Cytoplasmic side of the membrane; that stretch reads SLLRNLGY. The chain crosses the membrane as a helical span at residues 218 to 238; the sequence is LGYTSGLSLLCMIFFLIVVIC. The Extracellular segment spans residues 239 to 289; it reads KKFQIPCPVEAALVANETVNGTFTQAALALAFNSTADDACRPRYFIFNSQT. Cysteines 245 and 278 form a disulfide. Asn254 and Asn258 each carry an N-linked (GlcNAc...) asparagine glycan. The chain crosses the membrane as a helical span at residues 290-310; it reads VYAVPILTFSFVCHPAVLPIY. The Cytoplasmic segment spans residues 311-326; that stretch reads EELKSRSRRRMMNVSK. A helical transmembrane segment spans residues 327 to 347; sequence ISFFAMFLMYLLAALFGYLTF. The Extracellular segment spans residues 348–368; sequence YGHVESELLHTYSEIVGTDIL. A helical transmembrane segment spans residues 369 to 389; it reads LLVVRLAVLVAVTLTVPVVIF. Thr383 provides a ligand contact to Na(+). The Cytoplasmic portion of the chain corresponds to 390–410; sequence PIRSSVTHLLCPTKEFSWLRH. A helical membrane pass occupies residues 411–431; the sequence is SIITVTILSFTNLLVIFVPTI. The Extracellular segment spans residues 432-433; the sequence is RD. The helical transmembrane segment at 434-454 threads the bilayer; the sequence is IFGFIGASAAAMLIFILPSAF. Residues 455 to 469 lie on the Cytoplasmic side of the membrane; sequence YIKLVKKEPMRSVQK. A helical transmembrane segment spans residues 470 to 492; that stretch reads IGALCFLLSGIVVMIGSMGLIVL. At 493-504 the chain is on the extracellular side; that stretch reads DWVHDASAAGGH.

Belongs to the amino acid/polyamine transporter 2 family. Post-translationally, polyubiquitination by NEDD4L regulates the degradation and the activity of SLC38A2. Expressed in cerebral and cerebellar astrocytes and neurons.

It is found in the cell membrane. It carries out the reaction L-alanine(in) + Na(+)(in) = L-alanine(out) + Na(+)(out). The catalysed reaction is glycine(in) + Na(+)(in) = glycine(out) + Na(+)(out). It catalyses the reaction L-serine(in) + Na(+)(in) = L-serine(out) + Na(+)(out). The enzyme catalyses L-proline(in) + Na(+)(in) = L-proline(out) + Na(+)(out). It carries out the reaction L-methionine(in) + Na(+)(in) = L-methionine(out) + Na(+)(out). The catalysed reaction is L-histidine(in) + Na(+)(in) = L-histidine(out) + Na(+)(out). It catalyses the reaction L-asparagine(in) + Na(+)(in) = L-asparagine(out) + Na(+)(out). The enzyme catalyses L-glutamine(in) + Na(+)(in) = L-glutamine(out) + Na(+)(out). It carries out the reaction L-threonine(in) + Na(+)(in) = L-threonine(out) + Na(+)(out). The catalysed reaction is L-leucine(in) + Na(+)(in) = L-leucine(out) + Na(+)(out). It catalyses the reaction L-phenylalanine(in) + Na(+)(in) = L-phenylalanine(out) + Na(+)(out). Inhibited by N-methyl-D-glucamine. Inhibited by choline. Allosteric regulation of sodium ions binding by pH. Functionally, symporter that cotransports neutral amino acids and sodium ions from the extracellular to the intracellular side of the cell membrane. The transport is pH-sensitive, Li(+)-intolerant, electrogenic, driven by the Na(+) electrochemical gradient and cotransports of neutral amino acids and sodium ions with a stoichiometry of 1:1. May function in the transport of amino acids at the blood-brain barrier. May function in the transport of amino acids in the supply of maternal nutrients to the fetus through the placenta. Maintains a key metabolic glutamine/glutamate balance underpinning retrograde signaling by dendritic release of the neurotransmitter glutamate. Transports L-proline in differentiating osteoblasts for the efficient synthesis of proline-enriched proteins and provides proline essential for osteoblast differentiation and bone formation during bone development. The sequence is that of Sodium-coupled neutral amino acid symporter 2 from Mus musculus (Mouse).